We begin with the raw amino-acid sequence, 141 residues long: Hemoglobin subunit alpha (141 aa).

The 141-residue stretch at 1-141 (VLSAADKAHV…VSTVLTSKYR (141 aa)) folds into the Globin domain. Serine 3 carries the post-translational modification Phosphoserine. Residues lysine 7 and lysine 11 each carry the N6-succinyllysine modification. The residue at position 16 (lysine 16) is an N6-acetyllysine; alternate. Lysine 16 carries the post-translational modification N6-succinyllysine; alternate. Tyrosine 24 carries the phosphotyrosine modification. A Phosphoserine modification is found at serine 35. Lysine 40 is modified (N6-succinyllysine). Phosphoserine is present on serine 49. Histidine 58 is a binding site for O2. Heme b is bound at residue histidine 87. Residue threonine 108 is modified to Phosphothreonine. Serine 124 carries the phosphoserine modification. Phosphothreonine is present on residues threonine 134 and threonine 137. At serine 138 the chain carries Phosphoserine.

The protein belongs to the globin family. Heterotetramer of two alpha chains and two beta chains. In terms of tissue distribution, red blood cells.

In terms of biological role, involved in oxygen transport from the lung to the various peripheral tissues. Functionally, hemopressin acts as an antagonist peptide of the cannabinoid receptor CNR1. Hemopressin-binding efficiently blocks cannabinoid receptor CNR1 and subsequent signaling. The chain is Hemoglobin subunit alpha (HBA) from Bradypus tridactylus (Pale-throated three-toed sloth).